The chain runs to 700 residues: Elongation factor G (700 aa).

In terms of domain architecture, tr-type G spans 10–285 (DRTRNIGIMA…AVIDYLPSPL (276 aa)). GTP-binding positions include 19 to 26 (AHIDAGKT), 83 to 87 (DTPGH), and 137 to 140 (NKMD).

The protein belongs to the TRAFAC class translation factor GTPase superfamily. Classic translation factor GTPase family. EF-G/EF-2 subfamily.

It localises to the cytoplasm. Functionally, catalyzes the GTP-dependent ribosomal translocation step during translation elongation. During this step, the ribosome changes from the pre-translocational (PRE) to the post-translocational (POST) state as the newly formed A-site-bound peptidyl-tRNA and P-site-bound deacylated tRNA move to the P and E sites, respectively. Catalyzes the coordinated movement of the two tRNA molecules, the mRNA and conformational changes in the ribosome. This is Elongation factor G from Lacticaseibacillus paracasei (strain ATCC 334 / BCRC 17002 / CCUG 31169 / CIP 107868 / KCTC 3260 / NRRL B-441) (Lactobacillus paracasei).